The chain runs to 525 residues: Bifunctional purine biosynthesis protein PurH (525 aa).

One can recognise an MGS-like domain in the interval 1–149 (MSDPVIKRAL…KNHESVTVIT (149 aa)).

Belongs to the PurH family.

The enzyme catalyses (6R)-10-formyltetrahydrofolate + 5-amino-1-(5-phospho-beta-D-ribosyl)imidazole-4-carboxamide = 5-formamido-1-(5-phospho-D-ribosyl)imidazole-4-carboxamide + (6S)-5,6,7,8-tetrahydrofolate. It carries out the reaction IMP + H2O = 5-formamido-1-(5-phospho-D-ribosyl)imidazole-4-carboxamide. It functions in the pathway purine metabolism; IMP biosynthesis via de novo pathway; 5-formamido-1-(5-phospho-D-ribosyl)imidazole-4-carboxamide from 5-amino-1-(5-phospho-D-ribosyl)imidazole-4-carboxamide (10-formyl THF route): step 1/1. Its pathway is purine metabolism; IMP biosynthesis via de novo pathway; IMP from 5-formamido-1-(5-phospho-D-ribosyl)imidazole-4-carboxamide: step 1/1. This Chlorobium phaeobacteroides (strain BS1) protein is Bifunctional purine biosynthesis protein PurH.